The chain runs to 70 residues: MKAKEVIEILEIIIYIVVVPSLIVYYVSHNTVYVAITVTLTLNLARKTYSTKKKIEKMMKKVEKALEFFS.

This is an uncharacterized protein from Thermoproteus tenax virus 1 (strain KRA1) (TTV1).